The chain runs to 443 residues: Probable nitrate/nitrite antiporter NarK1 (443 aa).

The next 12 membrane-spanning stretches (helical) occupy residues 23-43 (TLAFTLMFAAWLMFGVLGVPI), 56-76 (WISALAILNGSLWRLLAGILA), 79-99 (YGGRLVFTLMLFFTAIPAYLV), 108-128 (LLLYAFLVGFAGNSFSVGIAW), 142-164 (LGVFGAGNVGASVTKFIGPALIA), 182-202 (FIPFLYAVLLVLMGFVLWFGT), 230-250 (FSLYYVVVFGAYVALSAWLPK), 255-275 (VFGLPLHEAALLTALFIFPAS), 298-318 (FGIILLASGVLMMPEGHIVLY), 329-349 (FTMGVELFTLLVFLIGVGMGI), 368-388 (AVGGLVGMLGALGGFFLPPLF), and 401-421 (TFFVLFLLAAISFLWMHLTVL).

Belongs to the major facilitator superfamily. Nitrate/nitrite porter (TC 2.A.1.8) family.

It localises to the cell membrane. The enzyme catalyses nitrate(in) + nitrite(out) = nitrate(out) + nitrite(in). Probable nitrate/nitrite antiporter that may be involved in nitrate import and nitrite export during anaerobic growth. This is Probable nitrate/nitrite antiporter NarK1 from Thermus thermophilus.